Reading from the N-terminus, the 99-residue chain is Nucleoid-associated protein Cj1642 (99 aa).

It belongs to the YbaB/EbfC family. Homodimer.

The protein localises to the cytoplasm. It localises to the nucleoid. Functionally, binds to DNA and alters its conformation. May be involved in regulation of gene expression, nucleoid organization and DNA protection. This chain is Nucleoid-associated protein Cj1642, found in Campylobacter jejuni subsp. jejuni serotype O:2 (strain ATCC 700819 / NCTC 11168).